We begin with the raw amino-acid sequence, 142 residues long: Probable inactive dual specificity protein phosphatase-like At4g18593 (142 aa).

This sequence belongs to the protein-tyrosine phosphatase family. Non-receptor class dual specificity subfamily.

This Arabidopsis thaliana (Mouse-ear cress) protein is Probable inactive dual specificity protein phosphatase-like At4g18593.